Consider the following 222-residue polypeptide: Countin-3 (222 aa).

An N-terminal signal peptide occupies residues 1–20 (MNKILSLFLITILLISKVMS). In terms of domain architecture, Saposin B-type spans 21–105 (SSEECKLCTD…ESVKMCQYND (85 aa)). Disulfide bonds link Cys-25-Cys-101, Cys-28-Cys-95, and Cys-56-Cys-68. N-linked (GlcNAc...) asparagine glycans are attached at residues Asn-108, Asn-134, and Asn-218.

This sequence belongs to the countin family.

It is found in the secreted. In terms of biological role, may control the size of the multicellular structure. The protein is Countin-3 (ctnC) of Dictyostelium discoideum (Social amoeba).